The following is a 206-amino-acid chain: Threonine efflux protein (206 aa).

A helical membrane pass occupies residues 1 to 21 (MLMLFLTVAMVHIVALMSPGP). The Periplasmic portion of the chain corresponds to 22-43 (DFFFVSQTAVSRSRKEAMMGVL). The helical transmembrane segment at 44 to 64 (GITCGVMVWAGIALLGLHLII) threads the bilayer. Residues 65 to 66 (EK) lie on the Cytoplasmic side of the membrane. Residues 67-87 (MAWLHTLIMVGGGLYLCWMGY) traverse the membrane as a helical segment. Residues 88–149 (QMLRGALKKE…VGDNVGTTAR (62 aa)) are Periplasmic-facing. The helical transmembrane segment at 150-173 (WGIFALIIVETLAWFTVVASLFAL) threads the bilayer. Topologically, residues 174–206 (PQMRRGYQRLAKWIDGFAGALFAGFGIHLIISR) are cytoplasmic.

This sequence belongs to the Rht family.

It is found in the cell inner membrane. Its function is as follows. Conducts the efflux of threonine. The polypeptide is Threonine efflux protein (rhtC) (Escherichia coli O157:H7).